Consider the following 1093-residue polypeptide: Protein translocase subunit SecA (1093 aa).

Residues Gln84, 102–106, and Asp491 each bind ATP; that span reads GEGKT. Disordered regions lie at residues 837-869 and 904-1062; these read QNLQ…SEHE and SELE…TSEA. Composition is skewed to basic and acidic residues over residues 904 to 937, 944 to 971, and 978 to 1062; these read SELE…DATK, EELK…EKLK, and PKDL…TSEA.

It belongs to the SecA family. In terms of assembly, monomer and homodimer. Part of the essential Sec protein translocation apparatus which comprises SecA, SecYEG and auxiliary proteins SecDF. Other proteins may also be involved.

The protein resides in the cell membrane. It is found in the cytoplasm. It catalyses the reaction ATP + H2O + cellular proteinSide 1 = ADP + phosphate + cellular proteinSide 2.. Part of the Sec protein translocase complex. Interacts with the SecYEG preprotein conducting channel. Has a central role in coupling the hydrolysis of ATP to the transfer of proteins into and across the cell membrane, serving as an ATP-driven molecular motor driving the stepwise translocation of polypeptide chains across the membrane. This is Protein translocase subunit SecA from Mycoplasmopsis synoviae (strain 53) (Mycoplasma synoviae).